The sequence spans 504 residues: Maturase K (504 aa).

Belongs to the intron maturase 2 family. MatK subfamily.

The protein resides in the plastid. It is found in the chloroplast. Functionally, usually encoded in the trnK tRNA gene intron. Probably assists in splicing its own and other chloroplast group II introns. The sequence is that of Maturase K from Aucuba japonica (Japanese laurel).